The primary structure comprises 286 residues: 3-hydroxyanthranilate 3,4-dioxygenase (286 aa).

Residues 1 to 160 (MERPVRVKAW…SEQYRTGKPN (160 aa)) are domain A (catalytic). Arg-43 is a binding site for O2. 3 residues coordinate Fe cation: His-47, Glu-53, and His-91. Glu-53 contacts substrate. Substrate-binding residues include Arg-95 and Glu-105. Residues 161-177 (PDQLLKEPPFPLSTRSV) are linker. The interval 178–286 (MEPMCLEAWL…QDPACKKSLG (109 aa)) is domain B.

It belongs to the 3-HAO family. In terms of assembly, monomer. Fe(2+) is required as a cofactor.

It localises to the cytoplasm. The protein resides in the cytosol. It catalyses the reaction 3-hydroxyanthranilate + O2 = (2Z,4Z)-2-amino-3-carboxymuconate 6-semialdehyde. Its pathway is cofactor biosynthesis; NAD(+) biosynthesis; quinolinate from L-kynurenine: step 3/3. Its function is as follows. Catalyzes the oxidative ring opening of 3-hydroxyanthranilate to 2-amino-3-carboxymuconate semialdehyde, which spontaneously cyclizes to quinolinate. In Bos taurus (Bovine), this protein is 3-hydroxyanthranilate 3,4-dioxygenase.